We begin with the raw amino-acid sequence, 455 residues long: Kynurenine--oxoglutarate transaminase 3 (455 aa).

Gly71 is a binding site for substrate. N6-acetyllysine; alternate is present on Lys116. Lys116 is modified (N6-succinyllysine; alternate). Asn218 provides a ligand contact to substrate. Lys280 carries the post-translational modification N6-(pyridoxal phosphate)lysine. Residue Arg430 participates in substrate binding.

This sequence belongs to the class-I pyridoxal-phosphate-dependent aminotransferase family. As to quaternary structure, homodimer. It depends on pyridoxal 5'-phosphate as a cofactor.

The catalysed reaction is L-kynurenine + 2-oxoglutarate = kynurenate + L-glutamate + H2O. The enzyme catalyses L-kynurenine + glyoxylate = kynurenate + glycine + H2O. It carries out the reaction 3-hydroxy-L-kynurenine + glyoxylate = xanthurenate + glycine + H2O. It catalyses the reaction an S-substituted L-cysteine + H2O = a thiol + pyruvate + NH4(+). It functions in the pathway amino-acid degradation; L-kynurenine degradation; kynurenate from L-kynurenine: step 1/2. Functionally, catalyzes the irreversible transamination of the L-tryptophan metabolite L-kynurenine to form kynurenic acid (KA), an intermediate in the tryptophan catabolic pathway which is also a broad spectrum antagonist of the three ionotropic excitatory amino acid receptors among others. May catalyze the beta-elimination of S-conjugates and Se-conjugates of L-(seleno)cysteine, resulting in the cleavage of the C-S or C-Se bond. Has transaminase activity towards L-kynurenine, tryptophan, phenylalanine, serine, cysteine, methionine, histidine, glutamine and asparagine with glyoxylate as an amino group acceptor (in vitro). Has lower activity with 2-oxoglutarate as amino group acceptor (in vitro). In Bos taurus (Bovine), this protein is Kynurenine--oxoglutarate transaminase 3.